A 666-amino-acid polypeptide reads, in one-letter code: Probable potassium transport system protein Kup (666 aa).

The next 12 membrane-spanning stretches (helical) occupy residues phenylalanine 53–leucine 73, valine 89–valine 109, leucine 144–threonine 164, proline 181–valine 201, alanine 212–isoleucine 232, alanine 247–leucine 267, tryptophan 291–leucine 311, leucine 324–alanine 344, isoleucine 381–phenylalanine 401, tyrosine 411–tryptophan 431, alanine 441–leucine 461, and leucine 463–threonine 483.

The protein belongs to the HAK/KUP transporter (TC 2.A.72) family.

The protein resides in the cell inner membrane. The catalysed reaction is K(+)(in) + H(+)(in) = K(+)(out) + H(+)(out). In terms of biological role, transport of potassium into the cell. Likely operates as a K(+):H(+) symporter. In Nitrobacter hamburgensis (strain DSM 10229 / NCIMB 13809 / X14), this protein is Probable potassium transport system protein Kup.